The chain runs to 259 residues: Global transcriptional regulator CodY (259 aa).

A GAF domain region spans residues 1–155; it reads MNLLEKTRKI…GATVVGMEIL (155 aa). The H-T-H motif DNA-binding region spans 203–222; that stretch reads ASKIADRVGITRSVIVNALR. Serine 215 carries the phosphoserine modification.

The protein belongs to the CodY family.

Its subcellular location is the cytoplasm. DNA-binding global transcriptional regulator which is involved in the adaptive response to starvation and acts by directly or indirectly controlling the expression of numerous genes in response to nutrient availability. During rapid exponential growth, CodY is highly active and represses genes whose products allow adaptation to nutrient depletion. This Lysinibacillus sphaericus (strain C3-41) protein is Global transcriptional regulator CodY.